We begin with the raw amino-acid sequence, 402 residues long: Enoyl-[acyl-carrier-protein] reductase [NADH] (402 aa).

Residues 48-53, 74-75, 111-112, and 140-141 contribute to the NAD(+) site; these read GASSGY, FE, DA, and LA. Tyr226 serves as a coordination point for substrate. The active-site Proton donor is the Tyr236. Residues Lys245 and 274–276 each bind NAD(+); that span reads VVT.

Belongs to the TER reductase family. As to quaternary structure, monomer.

The enzyme catalyses a 2,3-saturated acyl-[ACP] + NAD(+) = a (2E)-enoyl-[ACP] + NADH + H(+). Its pathway is lipid metabolism; fatty acid biosynthesis. Its function is as follows. Involved in the final reduction of the elongation cycle of fatty acid synthesis (FAS II). Catalyzes the reduction of a carbon-carbon double bond in an enoyl moiety that is covalently linked to an acyl carrier protein (ACP). The sequence is that of Enoyl-[acyl-carrier-protein] reductase [NADH] from Xanthomonas axonopodis pv. citri (strain 306).